We begin with the raw amino-acid sequence, 526 residues long: MRNLIFEEPEGIPGNSSSSLRYAWQSIRAPVIIPLLKLAVIVCSVMSIMLFVERVAMAAVILIVKVLRKKRYTKYNLEAMKQKLERSKKYPMVLIQIPMYNEKEVYKLSIGAVCGLSWPADRFIVQVLDDSTNPVLRELVEMECQKWIQKGVNVKYENRRNRNGYKAGALKEGLEKQYVEDCEFVAIFDADFQPDADFLWNTIPYLLENPKLGLVQARWKFVNSEECMMTRLQEMSLDYHFSVEQEVGSSTYSFFGFNGTAGVWRIQAIKDAGGWKDRTTVEDMDLAVRASLHGWEFVFVGDVKVKNELPSTFKAYRFQQHRWSCGPANLFKKMTKEIICCKRVPLLKRLHLIYAFFFVRKIVAHWVTFFFYCIVIPACVIVPEVNLKKQIAIYIPATITILNAVSTPRSMHLLVLWILFENVMSLHRTKAAIIGLLEANRVNEWVVTEKLGNAMKQRNNARPSRASRFRIIERIHPLEIIVGMYMLHCATYDLLFGHDHFFVYLLLQAGAFFTMGFGLVGTIVPT.

A helical membrane pass occupies residues Val31 to Phe51. Residue Asp130 is part of the active site. 2 residues coordinate substrate: Asp189 and Asp191. The active site involves Asp283. Helical transmembrane passes span Ile362 to Val382, Ile399 to Leu419, Pro477 to Gly497, and Phe501 to Gly521.

The protein belongs to the glycosyltransferase 2 family. Plant cellulose synthase-like A subfamily.

Its subcellular location is the golgi apparatus membrane. The enzyme catalyses GDP-mannose + (glucomannan)n = GDP + (glucomannan)n+1.. Its function is as follows. Possesses 4-beta-mannosyltransferase activity on mannan using GDP-mannose. The beta-1,4-mannan product is the backbone for galactomannan synthesis by galactomannan galactosyltransferase. The galactomannan is a hemicellulosic storage polysaccharide accumulated in the form of secondary wall thickenings in the seed endosperm. In Cyamopsis tetragonoloba (Guar), this protein is Glucomannan 4-beta-mannosyltransferase 1.